The following is a 392-amino-acid chain: MVRLLISTGEVSGDLQGSLLIQALQREVERRSLPLELMALGGPRMQASGAELLADTAPMGAIGLWEALPLVLPTLRLQSRVDHVLKQRPPDAVVLIDYMGANVRLGHKLRRWFPRVPIIYYIAPQEWAWRFGDGGTTQLLSFTDRILAIFPVEAEFYSQRGAKVTWVGHPLLDTVSVLPDRQQARERLGLKPGQRLLLLLPASRQQELRYLMPTLAKAAALLQQRDQSLEVIVPAGLASFEKSLQEALEAAAVRGRVLSAQQADELKPMLYAAADLALGKSGTVNMEMALRGVPQVVGYKVSRITAFVARHFLRFRVEHISPVNLLLKERLVPELLQDELTAEALVQAAIPLLEDPAQRNEMLEGYRRLRQTLGVPGVTDRAAKEILDLTKT.

Belongs to the LpxB family.

The catalysed reaction is a lipid X + a UDP-2-N,3-O-bis[(3R)-3-hydroxyacyl]-alpha-D-glucosamine = a lipid A disaccharide + UDP + H(+). The protein operates within bacterial outer membrane biogenesis; LPS lipid A biosynthesis. Functionally, condensation of UDP-2,3-diacylglucosamine and 2,3-diacylglucosamine-1-phosphate to form lipid A disaccharide, a precursor of lipid A, a phosphorylated glycolipid that anchors the lipopolysaccharide to the outer membrane of the cell. This chain is Lipid-A-disaccharide synthase, found in Prochlorococcus marinus (strain MIT 9313).